We begin with the raw amino-acid sequence, 500 residues long: AAA-ATPase At3g28580 (500 aa).

Residues 7–29 traverse the membrane as a helical segment; that stretch reads LWTNTGSALATLMFVYTIFKQFF. A disordered region spans residues 174–193; sequence NRERKLYSNTPGQSHGNNSK. The span at 180 to 193 shows a compositional bias: polar residues; it reads YSNTPGQSHGNNSK. 247–254 contributes to the ATP binding site; sequence GPPGTGKS. Positions 462 to 500 are disordered; that stretch reads KEEAKKKVEEEEEEKQRKKEKVKEIEAEKEKKKKIEEEN.

It belongs to the AAA ATPase family. BCS1 subfamily. Mg(2+) is required as a cofactor.

It is found in the membrane. It catalyses the reaction ATP + H2O = ADP + phosphate + H(+). The sequence is that of AAA-ATPase At3g28580 from Arabidopsis thaliana (Mouse-ear cress).